The following is a 320-amino-acid chain: Cytochrome f (320 aa).

An N-terminal signal peptide occupies residues 1–35 (MQNRNTFLGVKEQITRSIFVSIMIYVITRASISNA). 4 residues coordinate heme: Y36, C56, C59, and H60. A helical membrane pass occupies residues 286–306 (IQGLLFFLASVILAQIFLVLK).

Belongs to the cytochrome f family. The 4 large subunits of the cytochrome b6-f complex are cytochrome b6, subunit IV (17 kDa polypeptide, petD), cytochrome f and the Rieske protein, while the 4 small subunits are PetG, PetL, PetM and PetN. The complex functions as a dimer. It depends on heme as a cofactor.

Its subcellular location is the plastid. It localises to the chloroplast thylakoid membrane. Functionally, component of the cytochrome b6-f complex, which mediates electron transfer between photosystem II (PSII) and photosystem I (PSI), cyclic electron flow around PSI, and state transitions. This Dioscorea elephantipes (Elephant's foot yam) protein is Cytochrome f.